Consider the following 324-residue polypeptide: ATP synthase subunit a 2 (324 aa).

A signal peptide spans 1 to 33 (MKRVNVFRSGVFSRLFALLLPFLLGINGLVYAS). Transmembrane regions (helical) follow at residues 95-115 (HVVMMWIASAILLVVFLLVGN), 157-177 (LPYLLTVFAFILLLNLLGLVP), 179-199 (GATATGNINVTLTLAVFTFFI), 224-244 (ALWIIMIPIEIIGLFTKPFAL), 257-277 (IVILSLIFISFILKSYIVAMF), and 291-311 (IFVAFLQAFIFTMLSALFIGL).

The protein belongs to the ATPase A chain family. As to quaternary structure, F-type ATPases have 2 components, CF(1) - the catalytic core - and CF(0) - the membrane proton channel. CF(1) has five subunits: alpha(3), beta(3), gamma(1), delta(1), epsilon(1). CF(0) has four main subunits: a, b, b' and c.

It localises to the cell inner membrane. Its function is as follows. Key component of the proton channel; it plays a direct role in the translocation of protons across the membrane. The polypeptide is ATP synthase subunit a 2 (Prosthecochloris aestuarii (strain DSM 271 / SK 413)).